The sequence spans 139 residues: Ribulose bisphosphate carboxylase small subunit, chromosomal (139 aa).

This sequence belongs to the RuBisCO small chain family. In terms of assembly, heterohexadecamer of 8 large and 8 small subunits.

RuBisCO catalyzes two reactions: the carboxylation of D-ribulose 1,5-bisphosphate, the primary event in carbon dioxide fixation, as well as the oxidative fragmentation of the pentose substrate. Both reactions occur simultaneously and in competition at the same active site. Although the small subunit is not catalytic it is essential for maximal activity. The polypeptide is Ribulose bisphosphate carboxylase small subunit, chromosomal (Cupriavidus necator (Alcaligenes eutrophus)).